The primary structure comprises 257 residues: MILTALRGALGFLTRIPVGRDEAAWAAFARSPWTFPVVGYLVGGLVALSLFVPAPAPTVALAFVLAVYAVTGIGHLDGVADIGDAAAVHGDREERRRVLKDSALGVGGTVALALVVLGLATAALGLVEVAATAGDGGPLPPVIGIVVAAEVGAKAATATLVCVGDAPHEGLGSALTGESSPGATLSVFALAAPAALLTWPQVLPGLAALLVALATAALVARWSRRRLGGVSGDVLGATTELARVAALHAGVIAWTRF.

The next 4 membrane-spanning stretches (helical) occupy residues 28-48 (FARSPWTFPVVGYLVGGLVAL), 50-70 (LFVPAPAPTVALAFVLAVYAV), 110-130 (VALALVVLGLATAALGLVEVA), and 199-219 (WPQVLPGLAALLVALATAALV).

The protein belongs to the CobS family. Mg(2+) is required as a cofactor.

The protein resides in the cell membrane. The catalysed reaction is alpha-ribazole + adenosylcob(III)inamide-GDP = adenosylcob(III)alamin + GMP + H(+). It catalyses the reaction alpha-ribazole 5'-phosphate + adenosylcob(III)inamide-GDP = adenosylcob(III)alamin 5'-phosphate + GMP + H(+). It functions in the pathway cofactor biosynthesis; adenosylcobalamin biosynthesis; adenosylcobalamin from cob(II)yrinate a,c-diamide: step 7/7. Joins adenosylcobinamide-GDP and alpha-ribazole to generate adenosylcobalamin (Ado-cobalamin). Also synthesizes adenosylcobalamin 5'-phosphate from adenosylcobinamide-GDP and alpha-ribazole 5'-phosphate. The polypeptide is Adenosylcobinamide-GDP ribazoletransferase (Halorubrum lacusprofundi (strain ATCC 49239 / DSM 5036 / JCM 8891 / ACAM 34)).